Consider the following 222-residue polypeptide: Adenylate kinase, chloroplastic (222 aa).

Position 15–20 (Ala15–Thr20) interacts with ATP. Residues Ser35 to Val64 form an NMP region. AMP-binding positions include Arg41, Gln62–Val64, Gly91–Arg94, and Gln98. The tract at residues Gly128–Asp161 is LID. Position 129 (Arg129) interacts with ATP. Arg158 contributes to the AMP binding site. Ala195 provides a ligand contact to ATP.

As to quaternary structure, monomer.

The protein resides in the plastid. It localises to the chloroplast. It catalyses the reaction AMP + ATP = 2 ADP. In terms of biological role, catalyzes the reversible transfer of the terminal phosphate group between ATP and AMP. Plays an important role in cellular energy homeostasis and in adenine nucleotide metabolism. The maize enzyme also works with CMP, albeit with 10% of the activity with AMP. This chain is Adenylate kinase, chloroplastic (ADK1), found in Zea mays (Maize).